Reading from the N-terminus, the 348-residue chain is Fe-S cluster assembly protein DRE2 (348 aa).

The segment at 1–185 is N-terminal SAM-like domain; that stretch reads MSGEKSSLLL…KKPESPRASV (185 aa). Disordered stretches follow at residues 128-148 and 162-213; these read QTAP…SKSL and KKAE…TASK. Positions 186-241 are linker; it reads VAEDLDDGDELDGMNEDDSNSDELTASKSKFFDDVAGQDSADSIDEDDLVDDAEKS. Over residues 188–206 the composition is skewed to acidic residues; sequence EDLDDGDELDGMNEDDSNS. [2Fe-2S] cluster-binding residues include Cys248, Cys259, Cys262, and Cys264. Residues 248-264 are fe-S binding site A; the sequence is CGKTKTRRRKACKDCTC. [4Fe-4S] cluster contacts are provided by Cys311, Cys314, Cys322, and Cys325. 2 short sequence motifs (cx2C motif) span residues 311 to 314 and 322 to 325; these read CGSC and CSGC. A fe-S binding site B region spans residues 311–325; it reads CGSCSLGDAFRCSGC.

The protein belongs to the anamorsin family. In terms of assembly, monomer. Interacts with TAH18. Interacts with MIA40. [2Fe-2S] cluster is required as a cofactor. It depends on [4Fe-4S] cluster as a cofactor.

The protein localises to the cytoplasm. The protein resides in the mitochondrion intermembrane space. Its function is as follows. Component of the cytosolic iron-sulfur (Fe-S) protein assembly (CIA) machinery required for the maturation of extramitochondrial Fe-S proteins. Part of an electron transfer chain functioning in an early step of cytosolic Fe-S biogenesis, facilitating the de novo assembly of a [4Fe-4S] cluster on the scaffold complex CFD1-NBP35. Electrons are transferred to DRE2 from NADPH via the FAD- and FMN-containing protein TAH18. TAH18-DRE2 are also required for the assembly of the diferric tyrosyl radical cofactor of ribonucleotide reductase (RNR), probably by providing electrons for reduction during radical cofactor maturation in the catalytic small subunit RNR2. The polypeptide is Fe-S cluster assembly protein DRE2 (Lachancea thermotolerans (strain ATCC 56472 / CBS 6340 / NRRL Y-8284) (Yeast)).